Reading from the N-terminus, the 61-residue chain is MMFTVFLLVVLTTTVVSFPSDSASDGRDDEAKDERSDMYELKRNGRCCHPACGGKYFKCGR.

The signal sequence occupies residues 1–17; the sequence is MMFTVFLLVVLTTTVVS. Residues 18–44 constitute a propeptide that is removed on maturation; it reads FPSDSASDGRDDEAKDERSDMYELKRN. Intrachain disulfides connect C47/C52 and C48/C59. Cysteine amide is present on C59.

Belongs to the conotoxin A superfamily. As to expression, expressed by the venom duct.

The protein resides in the secreted. The sequence is that of Alpha-conotoxin CnIJ from Conus consors (Singed cone).